Here is a 677-residue protein sequence, read N- to C-terminus: Methionine--tRNA ligase (677 aa).

The 'HIGH' region motif lies at 15–25 (PYANGSIHLGH). The Zn(2+) site is built by Cys146, Cys149, Cys159, and Cys162. Residues 333–337 (KMSKS) carry the 'KMSKS' region motif. Lys336 contributes to the ATP binding site. Residues 575-677 (DFAKVDLRVA…DGAKPGQQVK (103 aa)) form the tRNA-binding domain.

The protein belongs to the class-I aminoacyl-tRNA synthetase family. MetG type 1 subfamily. In terms of assembly, homodimer. Zn(2+) is required as a cofactor.

The protein localises to the cytoplasm. The enzyme catalyses tRNA(Met) + L-methionine + ATP = L-methionyl-tRNA(Met) + AMP + diphosphate. Functionally, is required not only for elongation of protein synthesis but also for the initiation of all mRNA translation through initiator tRNA(fMet) aminoacylation. The polypeptide is Methionine--tRNA ligase (Klebsiella pneumoniae (strain 342)).